The sequence spans 201 residues: MBF complex negative regulatory component yox1 (201 aa).

Over residues 1–22 (MSLSDSPSKSGNTGKDLISNNE) the composition is skewed to polar residues. Positions 1–42 (MSLSDSPSKSGNTGKDLISNNEAKNHEDEETHQKKRRRRTTD) are disordered. Residues 23–32 (AKNHEDEETH) are compositionally biased toward basic and acidic residues. Positions 33-92 (QKKRRRRTTDAEATLLEQYFLKTPKPSLIERQELSKKLKSSMTPRELQIWFQNKRQSLRR) form a DNA-binding region, homeobox.

In terms of assembly, component of the MBF transcription factor complex. In terms of processing, phosphorylated in response to hydroxyurea. Phosphorylation inhibits the repressor activity and is dependent on rad3. However, the regulation of yox1 by rad3 is probably indirect.

The protein localises to the nucleus. In terms of biological role, negative regulatory component of the MBF transcription factor complex involved in cell-cycle G1/S phase-specific gene expression and more particularly DNA replication checkpoint-dependent gene expression. The chain is MBF complex negative regulatory component yox1 (yox1) from Schizosaccharomyces pombe (strain 972 / ATCC 24843) (Fission yeast).